The sequence spans 295 residues: 5'-adenylylsulfate reductase-like 6 (295 aa).

The signal sequence occupies residues 1-22 (MEKKLTLLLLVVVVLFVNLTNA). The Thioredoxin domain maps to 23–161 (TVRVQICPRE…LVAFYTDVTG (139 aa)). N-linked (GlcNAc...) asparagine glycosylation is present at N136. The helical transmembrane segment at 208–228 (ATVFVLLRLLHLISPTMVVFV) threads the bilayer.

The protein localises to the membrane. In Arabidopsis thaliana (Mouse-ear cress), this protein is 5'-adenylylsulfate reductase-like 6 (APRL6).